Reading from the N-terminus, the 32-residue chain is uncharacterized protein (32 aa).

This is an uncharacterized protein from Enterobacteria phage T4 (Bacteriophage T4).